The sequence spans 252 residues: tRNA uridine(34) hydroxylase (252 aa).

One can recognise a Rhodanese domain in the interval 129-223 (QGRPVVMLDT…YFEETGGKGF (95 aa)). C183 serves as the catalytic Cysteine persulfide intermediate.

Belongs to the TrhO family.

The enzyme catalyses uridine(34) in tRNA + AH2 + O2 = 5-hydroxyuridine(34) in tRNA + A + H2O. Functionally, catalyzes oxygen-dependent 5-hydroxyuridine (ho5U) modification at position 34 in tRNAs. The polypeptide is tRNA uridine(34) hydroxylase (Bordetella petrii (strain ATCC BAA-461 / DSM 12804 / CCUG 43448)).